Consider the following 433-residue polypeptide: Xylose isomerase (433 aa).

Active-site residues include His-99 and Asp-102. Residues Glu-230, Glu-266, His-269, Asp-294, Asp-305, Asp-307, and Asp-337 each coordinate Mg(2+).

This sequence belongs to the xylose isomerase family. In terms of assembly, homotetramer. It depends on Mg(2+) as a cofactor.

It is found in the cytoplasm. The enzyme catalyses alpha-D-xylose = alpha-D-xylulofuranose. The protein is Xylose isomerase of Roseobacter denitrificans (strain ATCC 33942 / OCh 114) (Erythrobacter sp. (strain OCh 114)).